A 728-amino-acid polypeptide reads, in one-letter code: Catalase-peroxidase (728 aa).

Positions 91–218 form a cross-link, tryptophyl-tyrosyl-methioninium (Trp-Tyr) (with M-244); it reads WHSAGTYRTA…LAAVQMGLIY (128 aa). The active-site Proton acceptor is the His-92. A cross-link (tryptophyl-tyrosyl-methioninium (Tyr-Met) (with W-91)) is located at residues 218 to 244; that stretch reads YVNPEGPDGNPDPVAAARDIRDTFARM. Residue His-259 coordinates heme b.

It belongs to the peroxidase family. Peroxidase/catalase subfamily. In terms of assembly, homodimer or homotetramer. The cofactor is heme b. Post-translationally, formation of the three residue Trp-Tyr-Met cross-link is important for the catalase, but not the peroxidase activity of the enzyme.

The catalysed reaction is H2O2 + AH2 = A + 2 H2O. The enzyme catalyses 2 H2O2 = O2 + 2 H2O. Bifunctional enzyme with both catalase and broad-spectrum peroxidase activity. This chain is Catalase-peroxidase, found in Burkholderia pseudomallei (strain 1710b).